The following is a 396-amino-acid chain: Probable peptidoglycan glycosyltransferase FtsW (396 aa).

The next 9 helical transmembrane spans lie at 17–37 (FCDG…WVMV), 61–81 (VFVL…MAWW), 83–103 (ANGP…LVAG), 117–137 (GIPL…VYLA), 159–179 (MVMA…AVVV), 198–218 (FLLL…AEPY), 274–294 (FVFA…VIGL), 316–336 (FAAY…FINI), and 350–370 (LPLL…VGML).

The protein belongs to the SEDS family. FtsW subfamily.

The protein resides in the cell inner membrane. The catalysed reaction is [GlcNAc-(1-&gt;4)-Mur2Ac(oyl-L-Ala-gamma-D-Glu-L-Lys-D-Ala-D-Ala)](n)-di-trans,octa-cis-undecaprenyl diphosphate + beta-D-GlcNAc-(1-&gt;4)-Mur2Ac(oyl-L-Ala-gamma-D-Glu-L-Lys-D-Ala-D-Ala)-di-trans,octa-cis-undecaprenyl diphosphate = [GlcNAc-(1-&gt;4)-Mur2Ac(oyl-L-Ala-gamma-D-Glu-L-Lys-D-Ala-D-Ala)](n+1)-di-trans,octa-cis-undecaprenyl diphosphate + di-trans,octa-cis-undecaprenyl diphosphate + H(+). It functions in the pathway cell wall biogenesis; peptidoglycan biosynthesis. Peptidoglycan polymerase that is essential for cell division. In Halomonas elongata (strain ATCC 33173 / DSM 2581 / NBRC 15536 / NCIMB 2198 / 1H9), this protein is Probable peptidoglycan glycosyltransferase FtsW.